A 330-amino-acid polypeptide reads, in one-letter code: Aspartate--ammonia ligase (330 aa).

Belongs to the class-II aminoacyl-tRNA synthetase family. AsnA subfamily.

Its subcellular location is the cytoplasm. It carries out the reaction L-aspartate + NH4(+) + ATP = L-asparagine + AMP + diphosphate + H(+). It functions in the pathway amino-acid biosynthesis; L-asparagine biosynthesis; L-asparagine from L-aspartate (ammonia route): step 1/1. This is Aspartate--ammonia ligase from Salmonella schwarzengrund (strain CVM19633).